The primary structure comprises 346 residues: tRNA pseudouridine synthase D (346 aa).

Asp-81 acts as the Nucleophile in catalysis. Residues 157–303 (GVPNYFGLQR…MKHERRILRL (147 aa)) enclose the TRUD domain.

The protein belongs to the pseudouridine synthase TruD family.

The enzyme catalyses uridine(13) in tRNA = pseudouridine(13) in tRNA. Its function is as follows. Responsible for synthesis of pseudouridine from uracil-13 in transfer RNAs. The polypeptide is tRNA pseudouridine synthase D (Stutzerimonas stutzeri (strain A1501) (Pseudomonas stutzeri)).